A 273-amino-acid polypeptide reads, in one-letter code: uncharacterized protein (273 aa).

Over residues 1-10 (MSSKKVKYNP) the composition is skewed to basic residues. Disordered stretches follow at residues 1-32 (MSSK…FGFN) and 50-124 (EDVE…QSSP). Polar residues-rich tracts occupy residues 12–24 (KSAS…SASA), 55–64 (QSFNGKSSNL), and 92–124 (PQSS…QSSP). At Ser-123 the chain carries Phosphoserine.

The protein resides in the nucleus. It is found in the cytoplasm. It localises to the cytoskeleton. The protein localises to the spindle. This is an uncharacterized protein from Schizosaccharomyces pombe (strain 972 / ATCC 24843) (Fission yeast).